The following is a 577-amino-acid chain: Sulfite reductase [NADPH] hemoprotein beta-component 2 (577 aa).

Positions 441, 447, 486, and 490 each coordinate [4Fe-4S] cluster. Cys-490 is a binding site for siroheme.

The protein belongs to the nitrite and sulfite reductase 4Fe-4S domain family. In terms of assembly, alpha(8)-beta(8). The alpha component is a flavoprotein, the beta component is a hemoprotein. Siroheme is required as a cofactor. Requires [4Fe-4S] cluster as cofactor.

It catalyses the reaction hydrogen sulfide + 3 NADP(+) + 3 H2O = sulfite + 3 NADPH + 4 H(+). It participates in sulfur metabolism; hydrogen sulfide biosynthesis; hydrogen sulfide from sulfite (NADPH route): step 1/1. Component of the sulfite reductase complex that catalyzes the 6-electron reduction of sulfite to sulfide. This is one of several activities required for the biosynthesis of L-cysteine from sulfate. The sequence is that of Sulfite reductase [NADPH] hemoprotein beta-component 2 from Pectobacterium carotovorum subsp. carotovorum (strain PC1).